Here is a 598-residue protein sequence, read N- to C-terminus: Mitogen-activated protein kinase 19 (598 aa).

The Protein kinase domain occupies 25 to 316; sequence YRILEVIGKG…AAEALADPYF (292 aa). ATP is bound by residues 31–39 and lysine 54; that span reads IGKGSYGVV. The active-site Proton acceptor is aspartate 151. Position 187 is a phosphothreonine (threonine 187). Residues 187 to 189 carry the TXY motif; it reads TDY. Tyrosine 189 is modified (phosphotyrosine). The residue at position 192 (threonine 192) is a Phosphothreonine. Positions 396–486 are disordered; that stretch reads GKSGPVIPPD…VTYENDRNLK (91 aa). Residues 414-425 show a composition bias toward low complexity; sequence SAVHSSAVNSNA.

Belongs to the protein kinase superfamily. CMGC Ser/Thr protein kinase family. MAP kinase subfamily. In terms of processing, dually phosphorylated on Thr-187 and Tyr-189, which activates the enzyme.

The catalysed reaction is L-seryl-[protein] + ATP = O-phospho-L-seryl-[protein] + ADP + H(+). It catalyses the reaction L-threonyl-[protein] + ATP = O-phospho-L-threonyl-[protein] + ADP + H(+). Activated by threonine and tyrosine phosphorylation. The polypeptide is Mitogen-activated protein kinase 19 (MPK19) (Arabidopsis thaliana (Mouse-ear cress)).